We begin with the raw amino-acid sequence, 238 residues long: Leucyl/phenylalanyl-tRNA--protein transferase (238 aa).

It belongs to the L/F-transferase family.

It is found in the cytoplasm. It carries out the reaction N-terminal L-lysyl-[protein] + L-leucyl-tRNA(Leu) = N-terminal L-leucyl-L-lysyl-[protein] + tRNA(Leu) + H(+). It catalyses the reaction N-terminal L-arginyl-[protein] + L-leucyl-tRNA(Leu) = N-terminal L-leucyl-L-arginyl-[protein] + tRNA(Leu) + H(+). The catalysed reaction is L-phenylalanyl-tRNA(Phe) + an N-terminal L-alpha-aminoacyl-[protein] = an N-terminal L-phenylalanyl-L-alpha-aminoacyl-[protein] + tRNA(Phe). Functions in the N-end rule pathway of protein degradation where it conjugates Leu, Phe and, less efficiently, Met from aminoacyl-tRNAs to the N-termini of proteins containing an N-terminal arginine or lysine. The chain is Leucyl/phenylalanyl-tRNA--protein transferase from Psychromonas ingrahamii (strain DSM 17664 / CCUG 51855 / 37).